Consider the following 233-residue polypeptide: Purine nucleoside phosphorylase DeoD-type (233 aa).

H4 provides a ligand contact to a purine D-ribonucleoside. Residues G20, R24, R43, and 87–90 each bind phosphate; that span reads RVGT. A purine D-ribonucleoside is bound by residues 179-181 and 203-204; these read EME and SD. Catalysis depends on D204, which acts as the Proton donor.

It belongs to the PNP/UDP phosphorylase family. In terms of assembly, homohexamer; trimer of homodimers.

It catalyses the reaction a purine D-ribonucleoside + phosphate = a purine nucleobase + alpha-D-ribose 1-phosphate. The enzyme catalyses a purine 2'-deoxy-D-ribonucleoside + phosphate = a purine nucleobase + 2-deoxy-alpha-D-ribose 1-phosphate. Functionally, catalyzes the reversible phosphorolytic breakdown of the N-glycosidic bond in the beta-(deoxy)ribonucleoside molecules, with the formation of the corresponding free purine bases and pentose-1-phosphate. The chain is Purine nucleoside phosphorylase DeoD-type from Clostridium novyi (strain NT).